A 260-amino-acid chain; its full sequence is Exosome complex component Rrp42 (260 aa).

The protein belongs to the RNase PH family. Rrp42 subfamily. Component of the archaeal exosome complex. Forms a hexameric ring-like arrangement composed of 3 Rrp41-Rrp42 heterodimers. The hexameric ring associates with a trimer of Rrp4 and/or Csl4 subunits.

It is found in the cytoplasm. Functionally, non-catalytic component of the exosome, which is a complex involved in RNA degradation. Contributes to the structuring of the Rrp41 active site. The polypeptide is Exosome complex component Rrp42 (Thermoplasma acidophilum (strain ATCC 25905 / DSM 1728 / JCM 9062 / NBRC 15155 / AMRC-C165)).